The sequence spans 232 residues: Protein Mis18-alpha (232 aa).

3 positions are modified to phosphoserine: Ser-36, Ser-39, and Ser-40. The region spanning 79 to 177 (PLVFLCSGCR…SVEAIESYIL (99 aa)) is the Mis18 domain. Residues Cys-84, Cys-87, Cys-140, and Cys-143 each coordinate Zn(2+). Lys-161 participates in a covalent cross-link: Glycyl lysine isopeptide (Lys-Gly) (interchain with G-Cter in SUMO2). A Phosphoserine modification is found at Ser-232.

It belongs to the mis18 family. Homodimer, and heterodimer with OIP5/MIS18B. Identified in a complex containing MIS18A, OIP5/MIS18B, MIS18BP1, RBBP7 and RBBP4.

It is found in the nucleus. It localises to the chromosome. The protein resides in the centromere. In terms of biological role, required for recruitment of CENPA to centromeres and normal chromosome segregation during mitosis. The polypeptide is Protein Mis18-alpha (MIS18A) (Otolemur garnettii (Small-eared galago)).